The chain runs to 244 residues: tRNA pseudouridine synthase A (244 aa).

Asp52 functions as the Nucleophile in the catalytic mechanism. Tyr110 contacts substrate.

It belongs to the tRNA pseudouridine synthase TruA family. As to quaternary structure, homodimer.

The enzyme catalyses uridine(38/39/40) in tRNA = pseudouridine(38/39/40) in tRNA. Its function is as follows. Formation of pseudouridine at positions 38, 39 and 40 in the anticodon stem and loop of transfer RNAs. The chain is tRNA pseudouridine synthase A from Geotalea uraniireducens (strain Rf4) (Geobacter uraniireducens).